A 1331-amino-acid chain; its full sequence is X-linked retinitis pigmentosa GTPase regulator-interacting protein 1 (1331 aa).

Disordered regions lie at residues Met-1–Phe-165, Ser-183–Cys-220, and His-351–Gln-374. The span at Asn-41–Arg-67 shows a compositional bias: basic and acidic residues. Polar residues-rich tracts occupy residues Val-77–Asp-86 and Ser-183–Ser-193. The span at Thr-194–Cys-220 shows a compositional bias: basic and acidic residues. Coiled-coil stretches lie at residues Glu-236–Gln-352 and Met-498–His-546. Polar residues predominate over residues His-351 to Thr-367. A C2 domain is found at Gly-745–Phe-870. 2 disordered regions span residues Phe-899–Lys-1057 and Ala-1088–Ile-1146. The stretch at Glu-908–Glu-999 forms a coiled coil. Residues Glu-910–Asn-988 are compositionally biased toward acidic residues. Basic and acidic residues-rich tracts occupy residues Pro-1022–Gln-1039 and Ala-1088–Ser-1115. The span at Cys-1129–Thr-1141 shows a compositional bias: polar residues. Positions Ser-1136–Thr-1326 are interaction with RPGR.

It belongs to the RPGRIP1 family. Interacts with NPHP4. Interacts with NEK4. Forms homodimers and elongated homopolymers. Interacts with RPGR. Interacts with SPATA7. Interacts with CEP290/NPHP6; mediating the association between RPGR and CEP290/NPHP6. In terms of tissue distribution, expressed in the retina (at protein level).

The protein localises to the cell projection. It is found in the cilium. May function as scaffolding protein. Required for normal location of RPGR at the connecting cilium of photoreceptor cells. Required for normal disk morphogenesis and disk organization in the outer segment of photoreceptor cells and for survival of photoreceptor cells. This is X-linked retinitis pigmentosa GTPase regulator-interacting protein 1 (Rpgrip1) from Mus musculus (Mouse).